We begin with the raw amino-acid sequence, 121 residues long: Oxalate-binding protein (121 aa).

Positions 49–117 constitute a Cupin type-2 domain; sequence RMKLPPGSSV…GNTDLEFLAV (69 aa). Residues His61, His63, and Glu68 each coordinate Mn(2+). Residue Tyr70 coordinates oxalate. A Mn(2+)-binding site is contributed by His102.

As to quaternary structure, homodimer.

Its function is as follows. Binds oxalate. The sequence is that of Oxalate-binding protein from Thermotoga maritima (strain ATCC 43589 / DSM 3109 / JCM 10099 / NBRC 100826 / MSB8).